A 342-amino-acid polypeptide reads, in one-letter code: L-threonine 3-dehydrogenase (342 aa).

Cys-38 lines the Zn(2+) pocket. Active-site charge relay system residues include Thr-40 and His-43. His-63, Glu-64, Cys-93, Cys-96, Cys-99, and Cys-107 together coordinate Zn(2+). Residues Ile-175, Asp-195, Arg-200, 262–264 (LGI), and 286–287 (IY) each bind NAD(+).

It belongs to the zinc-containing alcohol dehydrogenase family. Homotetramer. Zn(2+) is required as a cofactor.

The protein localises to the cytoplasm. The catalysed reaction is L-threonine + NAD(+) = (2S)-2-amino-3-oxobutanoate + NADH + H(+). The protein operates within amino-acid degradation; L-threonine degradation via oxydo-reductase pathway; glycine from L-threonine: step 1/2. Functionally, catalyzes the NAD(+)-dependent oxidation of L-threonine to 2-amino-3-ketobutyrate. This chain is L-threonine 3-dehydrogenase, found in Paraburkholderia phymatum (strain DSM 17167 / CIP 108236 / LMG 21445 / STM815) (Burkholderia phymatum).